Here is an 87-residue protein sequence, read N- to C-terminus: Small ribosomal subunit protein bS18 (87 aa).

Positions 1-10 (MAGKSSGDRR) are enriched in basic and acidic residues. The tract at residues 1 to 23 (MAGKSSGDRRKLLRGAKVGKNAA) is disordered.

The protein belongs to the bacterial ribosomal protein bS18 family. As to quaternary structure, part of the 30S ribosomal subunit. Forms a tight heterodimer with protein bS6.

Functionally, binds as a heterodimer with protein bS6 to the central domain of the 16S rRNA, where it helps stabilize the platform of the 30S subunit. The polypeptide is Small ribosomal subunit protein bS18 (Clavibacter sepedonicus (Clavibacter michiganensis subsp. sepedonicus)).